The following is a 139-amino-acid chain: Large ribosomal subunit protein bL17 (139 aa).

This sequence belongs to the bacterial ribosomal protein bL17 family. As to quaternary structure, part of the 50S ribosomal subunit. Contacts protein L32.

The sequence is that of Large ribosomal subunit protein bL17 from Afipia carboxidovorans (strain ATCC 49405 / DSM 1227 / KCTC 32145 / OM5) (Oligotropha carboxidovorans).